The primary structure comprises 1597 residues: Mitogen-activated protein kinase kinase kinase 4 (1597 aa).

Disordered stretches follow at residues 1–128 (MRDA…VETV) and 424–465 (SPRP…PRVP). Residues 59–69 (SDPEDFSDETN) show a composition bias toward acidic residues. Position 77 is a phosphoserine (S77). The span at 84–94 (QMKRLSAKHQR) shows a compositional bias: basic residues. A Phosphoserine modification is found at S424. The residue at position 440 (T440) is a Phosphothreonine. Residue S449 is modified to Phosphoserine. Positions 449–458 (SGTEESDEEP) are enriched in acidic residues. T451 carries the post-translational modification Phosphothreonine. S454 and S492 each carry phosphoserine. 3 disordered regions span residues 1137–1157 (RPVK…IIPT), 1190–1220 (AAGR…SVPE), and 1233–1263 (FRSL…TRRS). Positions 1210-1219 (APDTRGSSVP) are enriched in polar residues. Phosphoserine occurs at positions 1241 and 1263. Residues 1241–1250 (SPTEERDEPA) show a composition bias toward basic and acidic residues. The region spanning 1332-1590 (WQRGNKIGEG…ASQLLDHAFV (259 aa)) is the Protein kinase domain. ATP contacts are provided by residues 1338 to 1346 (IGEGQYGKV) and K1361. D1452 functions as the Proton acceptor in the catalytic mechanism.

It belongs to the protein kinase superfamily. STE Ser/Thr protein kinase family. MAP kinase kinase kinase subfamily. In terms of assembly, monomer and homodimer. Homodimerization enhances kinase activity. Interacts with CDC42. Interacts with TRAF4; this promotes homodimerization. Binds both upstream activators and downstream substrates in multimolecular complexes. Interacts with AXIN1 and DIXDC1; interaction with DIXDC1 prevents interaction with AXIN1. Interacts with GADD45 and MAP2K6. Interacts with ZFP36; this interaction enhances the association with SH3KBP1/CIN85. Interacts with SH3KBP1; this interaction enhances the association with ZFP36. Mg(2+) serves as cofactor. As to expression, widely expressed. High expression was found in skeletal muscle, kidney, testis followed by heart brain and lung. Low expression was found in spleen.

The protein resides in the cytoplasm. It is found in the perinuclear region. The enzyme catalyses L-seryl-[protein] + ATP = O-phospho-L-seryl-[protein] + ADP + H(+). It catalyses the reaction L-threonyl-[protein] + ATP = O-phospho-L-threonyl-[protein] + ADP + H(+). With respect to regulation, N-terminal autoinhibitory domain interacts with the C-terminal kinase domain, inhibiting kinase activity, and preventing interaction with its substrate, MAP2K6. The GADD45 proteins activate the kinase by binding to the N-terminal domain. Activated by phosphorylation on Thr-1494. In terms of biological role, component of a protein kinase signal transduction cascade. Activates the CSBP2, P38 and JNK MAPK pathways, but not the ERK pathway. Specifically phosphorylates and activates MAP2K4 and MAP2K6. In Mus musculus (Mouse), this protein is Mitogen-activated protein kinase kinase kinase 4 (Map3k4).